We begin with the raw amino-acid sequence, 199 residues long: dCTP deaminase, dUMP-forming (199 aa).

Residues 101–106 (KSSLGR), aspartate 119, 127–129 (TLE), glutamine 148, tyrosine 162, and glutamine 174 each bind dCTP. The Proton donor/acceptor role is filled by glutamate 129. The segment at 163–199 (GSAAAGSKYQGQRGPTPSRSYLNFPLPSDAVDAVESR) is disordered. Positions 171–183 (YQGQRGPTPSRSY) are enriched in polar residues.

Belongs to the dCTP deaminase family. As to quaternary structure, homotrimer.

It carries out the reaction dCTP + 2 H2O = dUMP + NH4(+) + diphosphate. It functions in the pathway pyrimidine metabolism; dUMP biosynthesis; dUMP from dCTP: step 1/1. In terms of biological role, bifunctional enzyme that catalyzes both the deamination of dCTP to dUTP and the hydrolysis of dUTP to dUMP without releasing the toxic dUTP intermediate. The sequence is that of dCTP deaminase, dUMP-forming from Nocardia farcinica (strain IFM 10152).